Here is a 111-residue protein sequence, read N- to C-terminus: Translation initiation factor 1A 1 (111 aa).

A disordered region spans residues 1-26 (MTLADLKKPTSRATPSTEETFTRVRT). Residues 22–96 (TRVRTPRREN…EKADVIWKYT (75 aa)) form the S1-like domain.

Belongs to the eIF-1A family.

Seems to be required for maximal rate of protein biosynthesis. Enhances ribosome dissociation into subunits and stabilizes the binding of the initiator Met-tRNA(I) to 40 S ribosomal subunits. This chain is Translation initiation factor 1A 1 (eIF1A1), found in Methanosarcina acetivorans (strain ATCC 35395 / DSM 2834 / JCM 12185 / C2A).